Consider the following 156-residue polypeptide: Small ribosomal subunit protein uS7 (156 aa).

The protein belongs to the universal ribosomal protein uS7 family. In terms of assembly, part of the 30S ribosomal subunit. Contacts proteins S9 and S11.

One of the primary rRNA binding proteins, it binds directly to 16S rRNA where it nucleates assembly of the head domain of the 30S subunit. Is located at the subunit interface close to the decoding center, probably blocks exit of the E-site tRNA. The chain is Small ribosomal subunit protein uS7 from Alkalilimnicola ehrlichii (strain ATCC BAA-1101 / DSM 17681 / MLHE-1).